The sequence spans 72 residues: Conotoxin Ep11.1 (72 aa).

An N-terminal signal peptide occupies residues 1-19 (MKLCVTFLLILVILPSVTG). Positions 20–32 (EKSSKRTLSGAAL) are excised as a propeptide. Intrachain disulfides connect Cys39–Cys53, Cys46–Cys58, Cys52–Cys63, and Cys57–Cys70.

Belongs to the conotoxin I1 superfamily. Expressed by the venom duct.

It is found in the secreted. In Conus episcopatus (Bishop's cone), this protein is Conotoxin Ep11.1.